A 433-amino-acid chain; its full sequence is 3-phosphoshikimate 1-carboxyvinyltransferase (433 aa).

3-phosphoshikimate contacts are provided by Lys-15, Ser-16, and Arg-20. Residue Lys-15 participates in phosphoenolpyruvate binding. Phosphoenolpyruvate is bound by residues Gly-96 and Arg-124. 5 residues coordinate 3-phosphoshikimate: Ser-169, Gln-171, Ser-195, Asp-318, and Lys-345. Gln-171 lines the phosphoenolpyruvate pocket. Asp-318 functions as the Proton acceptor in the catalytic mechanism. The phosphoenolpyruvate site is built by Arg-349 and Arg-393.

It belongs to the EPSP synthase family. In terms of assembly, monomer.

It localises to the cytoplasm. The catalysed reaction is 3-phosphoshikimate + phosphoenolpyruvate = 5-O-(1-carboxyvinyl)-3-phosphoshikimate + phosphate. The protein operates within metabolic intermediate biosynthesis; chorismate biosynthesis; chorismate from D-erythrose 4-phosphate and phosphoenolpyruvate: step 6/7. Catalyzes the transfer of the enolpyruvyl moiety of phosphoenolpyruvate (PEP) to the 5-hydroxyl of shikimate-3-phosphate (S3P) to produce enolpyruvyl shikimate-3-phosphate and inorganic phosphate. The chain is 3-phosphoshikimate 1-carboxyvinyltransferase from Chlorobium luteolum (strain DSM 273 / BCRC 81028 / 2530) (Pelodictyon luteolum).